We begin with the raw amino-acid sequence, 58 residues long: MAVPKKKTSKAKRNQRSATWKGKAAVAAQRAMSIGKSVLSGRAQGFVYPVREADDEES.

A compositionally biased stretch (basic residues) spans 1–15 (MAVPKKKTSKAKRNQ). The segment at 1–23 (MAVPKKKTSKAKRNQRSATWKGK) is disordered.

This sequence belongs to the bacterial ribosomal protein bL32 family.

The polypeptide is Large ribosomal subunit protein bL32 (Parasynechococcus marenigrum (strain WH8102)).